The following is a 371-amino-acid chain: Epoxyqueuosine reductase (371 aa).

Aspartate 137 (proton donor) is an active-site residue. The 33-residue stretch at 179–211 folds into the 4Fe-4S ferredoxin-type domain; sequence IPLPVDTPVENQCGKCTACISSCPTNAILENGV. [4Fe-4S] cluster-binding residues include cysteine 191, cysteine 194, cysteine 197, cysteine 201, cysteine 217, cysteine 244, cysteine 247, and cysteine 251.

Belongs to the QueG family. In terms of assembly, monomer. It depends on cob(II)alamin as a cofactor. Requires [4Fe-4S] cluster as cofactor.

It is found in the cytoplasm. It catalyses the reaction epoxyqueuosine(34) in tRNA + AH2 = queuosine(34) in tRNA + A + H2O. The protein operates within tRNA modification; tRNA-queuosine biosynthesis. In terms of biological role, catalyzes the conversion of epoxyqueuosine (oQ) to queuosine (Q), which is a hypermodified base found in the wobble positions of tRNA(Asp), tRNA(Asn), tRNA(His) and tRNA(Tyr). This chain is Epoxyqueuosine reductase, found in Aliivibrio fischeri (strain ATCC 700601 / ES114) (Vibrio fischeri).